The sequence spans 201 residues: MRTGEIHRVTGETDVSVRLGLDGSGRCQASTGVPFLDHMLHQISSHGLIDLEITASGDTHIDDHHTNEDVGIAFGQALSKALGDRRGIYRFGHFVAPLDEALVQVVLDCSGRPHISWGLTIPTQKIGTYDTELVKEFFVAVVNNSGLTLHIRQLDGVNSHHIVEACFKAFSRALRMATEIDPRRSGLVPSSKGVLEQAGGS.

It belongs to the imidazoleglycerol-phosphate dehydratase family.

It is found in the cytoplasm. It catalyses the reaction D-erythro-1-(imidazol-4-yl)glycerol 3-phosphate = 3-(imidazol-4-yl)-2-oxopropyl phosphate + H2O. The protein operates within amino-acid biosynthesis; L-histidine biosynthesis; L-histidine from 5-phospho-alpha-D-ribose 1-diphosphate: step 6/9. The sequence is that of Imidazoleglycerol-phosphate dehydratase from Synechococcus sp. (strain CC9311).